Reading from the N-terminus, the 86-residue chain is Large ribosomal subunit protein eL20 (86 aa).

This sequence belongs to the eukaryotic ribosomal protein eL20 family. Part of the 50S ribosomal subunit. Binds 23S rRNA.

This Saccharolobus islandicus (strain Y.N.15.51 / Yellowstone #2) (Sulfolobus islandicus) protein is Large ribosomal subunit protein eL20.